The sequence spans 348 residues: Anthranilate phosphoribosyltransferase (348 aa).

5-phospho-alpha-D-ribose 1-diphosphate-binding positions include glycine 83, 86 to 87, threonine 91, 93 to 96, 111 to 119, and threonine 123; these read GD, NVST, and KHGNRAASS. Glycine 83 provides a ligand contact to anthranilate. A Mg(2+)-binding site is contributed by serine 95. Asparagine 114 contributes to the anthranilate binding site. Arginine 169 is an anthranilate binding site. Mg(2+) contacts are provided by aspartate 227 and glutamate 228.

This sequence belongs to the anthranilate phosphoribosyltransferase family. Homodimer. Requires Mg(2+) as cofactor.

The catalysed reaction is N-(5-phospho-beta-D-ribosyl)anthranilate + diphosphate = 5-phospho-alpha-D-ribose 1-diphosphate + anthranilate. Its pathway is amino-acid biosynthesis; L-tryptophan biosynthesis; L-tryptophan from chorismate: step 2/5. Its function is as follows. Catalyzes the transfer of the phosphoribosyl group of 5-phosphorylribose-1-pyrophosphate (PRPP) to anthranilate to yield N-(5'-phosphoribosyl)-anthranilate (PRA). The chain is Anthranilate phosphoribosyltransferase from Thermobifida fusca (strain YX).